The primary structure comprises 91 residues: Small ribosomal subunit protein uS19 (91 aa).

It belongs to the universal ribosomal protein uS19 family.

Protein S19 forms a complex with S13 that binds strongly to the 16S ribosomal RNA. The protein is Small ribosomal subunit protein uS19 of Afipia carboxidovorans (strain ATCC 49405 / DSM 1227 / KCTC 32145 / OM5) (Oligotropha carboxidovorans).